The sequence spans 487 residues: 3-octaprenyl-4-hydroxybenzoate carboxy-lyase (487 aa).

Position 172 (Asn172) interacts with Mn(2+). Prenylated FMN contacts are provided by residues Ile175–Arg177, Arg189–Leu191, and Arg194–Gly195. Mn(2+) is bound at residue Glu238. Asp287 serves as the catalytic Proton donor.

This sequence belongs to the UbiD family. As to quaternary structure, homohexamer. Requires prenylated FMN as cofactor. The cofactor is Mn(2+).

It is found in the cell membrane. It carries out the reaction a 4-hydroxy-3-(all-trans-polyprenyl)benzoate + H(+) = a 2-(all-trans-polyprenyl)phenol + CO2. It functions in the pathway cofactor biosynthesis; ubiquinone biosynthesis. Its function is as follows. Catalyzes the decarboxylation of 3-octaprenyl-4-hydroxy benzoate to 2-octaprenylphenol, an intermediate step in ubiquinone biosynthesis. This is 3-octaprenyl-4-hydroxybenzoate carboxy-lyase from Nitrosospira multiformis (strain ATCC 25196 / NCIMB 11849 / C 71).